Consider the following 355-residue polypeptide: UDP-N-acetylglucosamine--N-acetylmuramyl-(pentapeptide) pyrophosphoryl-undecaprenol N-acetylglucosamine transferase (355 aa).

UDP-N-acetyl-alpha-D-glucosamine contacts are provided by residues 15–17 (TGG), Asn-127, Arg-163, Ser-191, Ile-244, 263–268 (ALTVSE), and Gln-288.

It belongs to the glycosyltransferase 28 family. MurG subfamily.

It is found in the cell inner membrane. It catalyses the reaction di-trans,octa-cis-undecaprenyl diphospho-N-acetyl-alpha-D-muramoyl-L-alanyl-D-glutamyl-meso-2,6-diaminopimeloyl-D-alanyl-D-alanine + UDP-N-acetyl-alpha-D-glucosamine = di-trans,octa-cis-undecaprenyl diphospho-[N-acetyl-alpha-D-glucosaminyl-(1-&gt;4)]-N-acetyl-alpha-D-muramoyl-L-alanyl-D-glutamyl-meso-2,6-diaminopimeloyl-D-alanyl-D-alanine + UDP + H(+). It participates in cell wall biogenesis; peptidoglycan biosynthesis. Functionally, cell wall formation. Catalyzes the transfer of a GlcNAc subunit on undecaprenyl-pyrophosphoryl-MurNAc-pentapeptide (lipid intermediate I) to form undecaprenyl-pyrophosphoryl-MurNAc-(pentapeptide)GlcNAc (lipid intermediate II). The polypeptide is UDP-N-acetylglucosamine--N-acetylmuramyl-(pentapeptide) pyrophosphoryl-undecaprenol N-acetylglucosamine transferase (Escherichia coli O139:H28 (strain E24377A / ETEC)).